A 158-amino-acid polypeptide reads, in one-letter code: Heavy metal-associated isoprenylated plant protein 23 (158 aa).

Residues 31–94 form the HMA domain; it reads FQTVELKVRM…KAKATGKKAE (64 aa). The a metal cation site is built by cysteine 42 and cysteine 45. Cysteine 155 carries the cysteine methyl ester modification. Cysteine 155 carries S-farnesyl cysteine lipidation. Positions 156–158 are cleaved as a propeptide — removed in mature form; that stretch reads SIM.

This sequence belongs to the HIPP family. Interacts with ZHD11/HB29.

Heavy-metal-binding protein. The polypeptide is Heavy metal-associated isoprenylated plant protein 23 (Arabidopsis thaliana (Mouse-ear cress)).